Reading from the N-terminus, the 432-residue chain is D-amino acid dehydrogenase (432 aa).

Valine 3 to tryptophan 17 lines the FAD pocket.

This sequence belongs to the DadA oxidoreductase family. The cofactor is FAD.

It catalyses the reaction a D-alpha-amino acid + A + H2O = a 2-oxocarboxylate + AH2 + NH4(+). It functions in the pathway amino-acid degradation; D-alanine degradation; NH(3) and pyruvate from D-alanine: step 1/1. Its function is as follows. Oxidative deamination of D-amino acids. The polypeptide is D-amino acid dehydrogenase (Shigella dysenteriae serotype 1 (strain Sd197)).